The following is an 883-amino-acid chain: Phosphoenolpyruvate carboxylase (883 aa).

Active-site residues include H138 and K546.

This sequence belongs to the PEPCase type 1 family. As to quaternary structure, homotetramer. Mg(2+) is required as a cofactor.

The enzyme catalyses oxaloacetate + phosphate = phosphoenolpyruvate + hydrogencarbonate. Its activity is regulated as follows. The enzyme has distinct binding sites for each of the allosteric effectors such as acetyl-CoA, fructose 1,6-bisphosphate, guanosine 3'-diphosphate 5'-diphosphate, long chain fatty acids, and L-aspartate. Forms oxaloacetate, a four-carbon dicarboxylic acid source for the tricarboxylic acid cycle. This is Phosphoenolpyruvate carboxylase (ppc) from Salmonella typhi.